A 227-amino-acid polypeptide reads, in one-letter code: Phosphoribosylformylglycinamidine synthase subunit PurQ (227 aa).

The Glutamine amidotransferase type-1 domain maps to F3 to V225. The Nucleophile role is filled by C86. Active-site residues include H194 and E196.

As to quaternary structure, part of the FGAM synthase complex composed of 1 PurL, 1 PurQ and 2 PurS subunits.

It is found in the cytoplasm. The catalysed reaction is N(2)-formyl-N(1)-(5-phospho-beta-D-ribosyl)glycinamide + L-glutamine + ATP + H2O = 2-formamido-N(1)-(5-O-phospho-beta-D-ribosyl)acetamidine + L-glutamate + ADP + phosphate + H(+). It catalyses the reaction L-glutamine + H2O = L-glutamate + NH4(+). It participates in purine metabolism; IMP biosynthesis via de novo pathway; 5-amino-1-(5-phospho-D-ribosyl)imidazole from N(2)-formyl-N(1)-(5-phospho-D-ribosyl)glycinamide: step 1/2. In terms of biological role, part of the phosphoribosylformylglycinamidine synthase complex involved in the purines biosynthetic pathway. Catalyzes the ATP-dependent conversion of formylglycinamide ribonucleotide (FGAR) and glutamine to yield formylglycinamidine ribonucleotide (FGAM) and glutamate. The FGAM synthase complex is composed of three subunits. PurQ produces an ammonia molecule by converting glutamine to glutamate. PurL transfers the ammonia molecule to FGAR to form FGAM in an ATP-dependent manner. PurS interacts with PurQ and PurL and is thought to assist in the transfer of the ammonia molecule from PurQ to PurL. The protein is Phosphoribosylformylglycinamidine synthase subunit PurQ of Bacillus cereus (strain 03BB102).